Reading from the N-terminus, the 488-residue chain is Mannosylglycerate hydrolase MGH1 (488 aa).

Residues Tyr94, 98–101, Tyr146, Gln167, and Gly227 each bind substrate; that span reads WNWD. Asp229 serves as the catalytic Proton donor. Residues Arg262 and 415–416 each bind substrate; that span reads YW. The active-site Proton acceptor is Glu459.

Belongs to the glycosyl hydrolase 63 family.

The enzyme catalyses (2R)-2-O-(alpha-D-mannosyl)-glycerate + H2O = D-mannose + (R)-glycerate. It carries out the reaction (2R)-2-O-(alpha-D-glucopyranosyl)-glycerate + H2O = (R)-glycerate + D-glucose. Its activity is regulated as follows. Activity is not dependent on divalent cations, but it is enhanced by Mn(2+). In terms of biological role, catalyzes the hydrolysis of alpha-D-mannosyl-glycerate (MG) to D-glycerate and D-mannose. Can also hydrolyze alpha-D-glucopyranosyl-glycerate (GG)with lower efficiency. The polypeptide is Mannosylglycerate hydrolase MGH1 (Selaginella moellendorffii (Spikemoss)).